The primary structure comprises 155 residues: Trypsin/factor XIIA inhibitor (155 aa).

The N-terminal stretch at 1 to 28 is a signal peptide; the sequence is MASSSSSSHRRLILAAAVLLSVLAAASA. 5 disulfide bridges follow: cysteine 34/cysteine 83, cysteine 48/cysteine 72, cysteine 57/cysteine 114, cysteine 73/cysteine 132, and cysteine 85/cysteine 143. Arginine 62 is an active-site residue. A propeptide spans 139 to 155 (C-terminal peptide); the sequence is GVAECPWILGGGTMPSK.

Belongs to the protease inhibitor I6 (cereal trypsin/alpha-amylase inhibitor) family. Monomer.

It is found in the secreted. In terms of biological role, potent inhibitor of mammalian trypsin and a specific inhibitor of factor XIIa (activated hageman factor). The polypeptide is Trypsin/factor XIIA inhibitor (Zea mays (Maize)).